A 465-amino-acid polypeptide reads, in one-letter code: Chromosomal replication initiator protein DnaA (465 aa).

Positions 1-80 (MLWTDCLTRL…VEILVDSRPG (80 aa)) are domain I, interacts with DnaA modulators. A domain II region spans residues 80–127 (GAILSPAEQPATTTAALSSTPVVPQRVKKEVVEPAATQSNKILNSKKR). Positions 128 to 345 (LLNPLFTFSL…GALNKVVAIA (218 aa)) are domain III, AAA+ region. ATP contacts are provided by glycine 173, glycine 175, lysine 176, and threonine 177. Residues 346–465 (RFKGSQIDLD…YKNLLRLLQS (120 aa)) are domain IV, binds dsDNA.

The protein belongs to the DnaA family. As to quaternary structure, oligomerizes as a right-handed, spiral filament on DNA at oriC.

The protein resides in the cytoplasm. Functionally, plays an essential role in the initiation and regulation of chromosomal replication. ATP-DnaA binds to the origin of replication (oriC) to initiate formation of the DNA replication initiation complex once per cell cycle. Binds the DnaA box (a 9 base pair repeat at the origin) and separates the double-stranded (ds)DNA. Forms a right-handed helical filament on oriC DNA; dsDNA binds to the exterior of the filament while single-stranded (ss)DNA is stabiized in the filament's interior. The ATP-DnaA-oriC complex binds and stabilizes one strand of the AT-rich DNA unwinding element (DUE), permitting loading of DNA polymerase. After initiation quickly degrades to an ADP-DnaA complex that is not apt for DNA replication. Binds acidic phospholipids. The sequence is that of Chromosomal replication initiator protein DnaA from Acinetobacter baylyi (strain ATCC 33305 / BD413 / ADP1).